Here is a 459-residue protein sequence, read N- to C-terminus: Ribulose bisphosphate carboxylase large chain (459 aa).

Lys-4 is modified (N6,N6,N6-trimethyllysine). Residues Asn-113 and Thr-163 each contribute to the substrate site. Residue Lys-165 is the Proton acceptor of the active site. Lys-167 is a binding site for substrate. Mg(2+)-binding residues include Lys-191, Asp-193, and Glu-194. Lys-191 is subject to N6-carboxylysine. The active-site Proton acceptor is His-284. Arg-285, His-317, and Ser-369 together coordinate substrate.

Belongs to the RuBisCO large chain family. Type I subfamily. In terms of assembly, heterohexadecamer of 8 large chains and 8 small chains; disulfide-linked. The disulfide link is formed within the large subunit homodimers. It depends on Mg(2+) as a cofactor. In terms of processing, the disulfide bond which can form in the large chain dimeric partners within the hexadecamer appears to be associated with oxidative stress and protein turnover.

Its subcellular location is the plastid. It is found in the chloroplast. The enzyme catalyses 2 (2R)-3-phosphoglycerate + 2 H(+) = D-ribulose 1,5-bisphosphate + CO2 + H2O. It catalyses the reaction D-ribulose 1,5-bisphosphate + O2 = 2-phosphoglycolate + (2R)-3-phosphoglycerate + 2 H(+). Functionally, ruBisCO catalyzes two reactions: the carboxylation of D-ribulose 1,5-bisphosphate, the primary event in carbon dioxide fixation, as well as the oxidative fragmentation of the pentose substrate in the photorespiration process. Both reactions occur simultaneously and in competition at the same active site. The sequence is that of Ribulose bisphosphate carboxylase large chain from Garrya elliptica (Wavyleaf silktassel).